A 449-amino-acid polypeptide reads, in one-letter code: Gamma conglutin 1 (449 aa).

An N-terminal signal peptide occupies residues 1-33; sequence MARNMAHILHILVISLSYSFLFVSSSSQDSQSL. The 370-residue stretch at 60-429 folds into the Peptidase A1 domain; that stretch reads HWANIHKRTP…DLERSRVGFN (370 aa). Cystine bridges form between cysteine 88-cysteine 178, cysteine 102-cysteine 115, cysteine 107-cysteine 133, cysteine 118-cysteine 128, and cysteine 350-cysteine 391. An N-linked (GlcNAc...) asparagine glycan is attached at asparagine 130.

The protein belongs to the peptidase A1 family. In terms of assembly, two-subunit monomeric unit made of alpha and beta subunits coupled by disulfide bonds (at pH 4.5 and under non-reducing conditions). Can also form oligomers including dimer, tetramer and cyclic hexamer (trimer of dimers) (at pH &gt; 5.5). Component of globulins complexes which accumulate in seeds. Interacts with flavonoids (e.g. apigenin glucosides) present in globulins complexes. Forms a static complex with vitexin. Post-translationally, undergoes very complex post-translational maturation; the proteolytic processing leading to the formation of two alpha and beta subunits is incomplete, leaving a certain amount of the protein in an uncut form. In terms of processing, glycosylated on alpha chain. In terms of tissue distribution, expressed in developing cotyledons and in the embryonic axis of germinating seeds. Accumulates in seeds, especially in the protein bodies of developing cotyledonary cells (at protein level). Also detected, at low levels, in plumules and radicles.

Its subcellular location is the secreted. It is found in the extracellular space. Its function is as follows. Sulfur-rich seed storage protein that remains undegraded at germination. The sequence is that of Gamma conglutin 1 from Lupinus angustifolius (Narrow-leaved blue lupine).